The sequence spans 971 residues: Nucleolar protein dao-5 (971 aa).

2 disordered regions span residues 61–926 and 938–971; these read RIAS…QWGQ and KAFR…DSDD. Residues 134 to 150 are compositionally biased toward low complexity; it reads KKPAQTPAQKKAASSSD. Acidic residues predominate over residues 180-190; sequence SDSDSDSEDSD. Low complexity-rich tracts occupy residues 264 to 275, 294 to 304, 324 to 335, 355 to 366, 386 to 397, 417 to 428, 447 to 457, 476 to 498, 508 to 519, 539 to 550, 569 to 579, 598 to 620, 630 to 641, 691 to 712, 751 to 761, 780 to 791, and 815 to 825; these read AKPAPAKATPKP, KKTPAKAAPKP, AKPTPAKATPKP, AKPTSAKATPKP, AKST…SSSD, AKPTPANATPKP, KATP…SSSD, AKPTPKATPKQ, KKTPAKSTPAKT, and ATTPAKSTPKT. The segment covering 907–921 has biased composition (basic and acidic residues); it reads SVSEKFRNNQHDSHF. Positions 939–950 are enriched in basic residues; it reads AFRHEKTKKKKG. Polar residues predominate over residues 957-971; it reads INQSINSIKFSDSDD.

Belongs to the NOLC1 family. May form dimers. Interacts with RNA polymerase I. In terms of tissue distribution, expressed in the nerve ring and hypodermal tissues. Expressed in the intestine. Expressed in the germline.

Its subcellular location is the nucleus. The protein localises to the nucleolus. It localises to the nucleoplasm. Functionally, nucleolar protein which binds to RNA polymerase I and rDNA and is required for efficient RNA polymerase I-mediated rDNA transcription. Maintains the epigenetically active status of rDNA chromatin which facilitates rDNA transcription and sustains germline development, ensuring fertility. Plays a role in the modulation of nucleolus size. May play a role in the regulation of lifespan. The sequence is that of Nucleolar protein dao-5 from Caenorhabditis elegans.